The following is a 492-amino-acid chain: Propanoyl-CoA:succinate CoA transferase (492 aa).

260–264 (GVGNI) is a binding site for CoA. Glu286 acts as the 5-glutamyl coenzyme A thioester intermediate in catalysis. The CoA site is built by Asn376 and Gly380.

Belongs to the acetyl-CoA hydrolase/transferase family.

It carries out the reaction propanoyl-CoA + succinate = propanoate + succinyl-CoA. Functionally, catalyzes the transfer of coenzyme A from propionyl-CoA to succinate. Could be part of a pathway that converts succinate to propionate. This is Propanoyl-CoA:succinate CoA transferase from Escherichia coli (strain K12).